Here is a 323-residue protein sequence, read N- to C-terminus: o-succinylbenzoate synthase (323 aa).

The Proton donor role is filled by lysine 134. Mg(2+)-binding residues include aspartate 162, glutamate 191, and aspartate 214. Lysine 236 (proton acceptor) is an active-site residue.

It belongs to the mandelate racemase/muconate lactonizing enzyme family. MenC type 1 subfamily. It depends on a divalent metal cation as a cofactor.

The catalysed reaction is (1R,6R)-6-hydroxy-2-succinyl-cyclohexa-2,4-diene-1-carboxylate = 2-succinylbenzoate + H2O. It functions in the pathway quinol/quinone metabolism; 1,4-dihydroxy-2-naphthoate biosynthesis; 1,4-dihydroxy-2-naphthoate from chorismate: step 4/7. It participates in quinol/quinone metabolism; menaquinone biosynthesis. In terms of biological role, converts 2-succinyl-6-hydroxy-2,4-cyclohexadiene-1-carboxylate (SHCHC) to 2-succinylbenzoate (OSB). The sequence is that of o-succinylbenzoate synthase from Photorhabdus laumondii subsp. laumondii (strain DSM 15139 / CIP 105565 / TT01) (Photorhabdus luminescens subsp. laumondii).